The sequence spans 1391 residues: Eukaryotic translation initiation factor 3 subunit A (1391 aa).

Residues 315-498 form the PCI domain; it reads MQRMSTRVLL…RTLSFGSDLN (184 aa). Basic and acidic residues-rich tracts occupy residues 809–921, 940–959, 966–1234, 1246–1257, 1265–1307, and 1313–1380; these read DKEE…RGGP, AALR…EKVS, EKGG…RDQT, GWREREKAREDS, QAPE…ETPR, and DSDR…IKPE. The segment at 809–1391 is disordered; the sequence is DKEEEEERLR…DEDGWTTVRR (583 aa). 2 repeat units span residues 973–982 and 983–992. A 26 X 10 AA approximate tandem repeats of [DE]-[DE]-[DE]-R-[GATV]-[PS]-[KRW]-R-G-[AEFGIL] region spans residues 973 to 1229; it reads DEDRGPKRGL…DDDRGPRRGE (257 aa). The 3; approximate repeat unit spans residues 993-1001; sequence DDAGPRRGF. 20 repeat units span residues 1002–1011, 1012–1021, 1022–1031, 1032–1041, 1042–1051, 1052–1061, 1062–1071, 1072–1081, 1082–1091, 1092–1101, 1102–1111, 1112–1120, 1122–1131, 1132–1141, 1142–1151, 1152–1161, 1162–1171, 1172–1181, 1182–1191, and 1192–1201. One copy of the 24; approximate repeat lies at 1202–1209; the sequence is DDVPRRGA. Repeat copies occupy residues 1210-1219 and 1220-1229.

This sequence belongs to the eIF-3 subunit A family. In terms of assembly, component of the eukaryotic translation initiation factor 3 (eIF-3) complex, which is composed of 13 subunits: eif3a, eif3b, eif3c, eif3d, eif3e, eif3f, eif3g, eif3h, eif3i, eif3j, eif3k, eif3l and eif3m.

The protein resides in the cytoplasm. Its function is as follows. RNA-binding component of the eukaryotic translation initiation factor 3 (eIF-3) complex, which is involved in protein synthesis of a specialized repertoire of mRNAs and, together with other initiation factors, stimulates binding of mRNA and methionyl-tRNAi to the 40S ribosome. The eIF-3 complex specifically targets and initiates translation of a subset of mRNAs involved in cell proliferation. This Xenopus tropicalis (Western clawed frog) protein is Eukaryotic translation initiation factor 3 subunit A (eif3a).